The chain runs to 338 residues: Ankyrin-repeat domain containing transcription coregulator asaA (338 aa).

A compositionally biased stretch (basic and acidic residues) spans methionine 1–alanine 10. Disordered stretches follow at residues methionine 1 to threonine 70 and alanine 112 to aspartate 137. Basic residues predominate over residues leucine 11–leucine 33. A compositionally biased stretch (polar residues) spans serine 42 to threonine 70. The segment covering alanine 112–proline 130 has biased composition (low complexity). ANK repeat units lie at residues arginine 235–alanine 264, glutamate 268–leucine 297, and alanine 301–tyrosine 330.

The protein operates within secondary metabolite biosynthesis. Its function is as follows. Transcription coregulator involved in regulation of gene cluster that mediates the biosynthesis of aspergillic acid, a hydroxamic acid-containing pyrazinone with aliphatic side chains that originates from leucine (Leu) and isoleucine (Ile). Aspergillic acid has antibiotic properties and was shown to be lethal to mice. This Aspergillus flavus (strain ATCC 200026 / FGSC A1120 / IAM 13836 / NRRL 3357 / JCM 12722 / SRRC 167) protein is Ankyrin-repeat domain containing transcription coregulator asaA.